Reading from the N-terminus, the 67-residue chain is uncharacterized protein (67 aa).

This is an uncharacterized protein from Measles virus (strain Halle) (MeV).